We begin with the raw amino-acid sequence, 137 residues long: Nucleoside diphosphate kinase (137 aa).

ATP contacts are provided by lysine 9, phenylalanine 57, arginine 85, threonine 91, arginine 102, and asparagine 112. The active-site Pros-phosphohistidine intermediate is histidine 115.

This sequence belongs to the NDK family. Homotetramer. Mg(2+) is required as a cofactor.

It is found in the cytoplasm. It catalyses the reaction a 2'-deoxyribonucleoside 5'-diphosphate + ATP = a 2'-deoxyribonucleoside 5'-triphosphate + ADP. The enzyme catalyses a ribonucleoside 5'-diphosphate + ATP = a ribonucleoside 5'-triphosphate + ADP. In terms of biological role, major role in the synthesis of nucleoside triphosphates other than ATP. The ATP gamma phosphate is transferred to the NDP beta phosphate via a ping-pong mechanism, using a phosphorylated active-site intermediate. The protein is Nucleoside diphosphate kinase of Geotalea uraniireducens (strain Rf4) (Geobacter uraniireducens).